Here is a 104-residue protein sequence, read N- to C-terminus: Large ribosomal subunit protein uL23 (104 aa).

It belongs to the universal ribosomal protein uL23 family. As to quaternary structure, part of the 50S ribosomal subunit. Contacts protein L29, and trigger factor when it is bound to the ribosome.

Functionally, one of the early assembly proteins it binds 23S rRNA. One of the proteins that surrounds the polypeptide exit tunnel on the outside of the ribosome. Forms the main docking site for trigger factor binding to the ribosome. The protein is Large ribosomal subunit protein uL23 of Leptospira interrogans serogroup Icterohaemorrhagiae serovar copenhageni (strain Fiocruz L1-130).